A 226-amino-acid chain; its full sequence is UPF0758 protein SAK_1186 (226 aa).

An MPN domain is found at 103 to 225 (QILSSEQLAR…YYSFREEADI (123 aa)). Positions 174, 176, and 187 each coordinate Zn(2+). The JAMM motif signature appears at 174–187 (HNHPSGSPKPSESD).

Belongs to the UPF0758 family.

The polypeptide is UPF0758 protein SAK_1186 (Streptococcus agalactiae serotype Ia (strain ATCC 27591 / A909 / CDC SS700)).